The sequence spans 427 residues: 3-phosphoshikimate 1-carboxyvinyltransferase (427 aa).

3-phosphoshikimate-binding residues include lysine 22, serine 23, and arginine 27. Lysine 22 contributes to the phosphoenolpyruvate binding site. Phosphoenolpyruvate-binding residues include glycine 96 and arginine 124. Residues serine 169, serine 170, glutamine 171, serine 197, aspartate 313, asparagine 336, and lysine 340 each coordinate 3-phosphoshikimate. Glutamine 171 provides a ligand contact to phosphoenolpyruvate. The active-site Proton acceptor is aspartate 313. Residues arginine 344, arginine 386, and lysine 411 each coordinate phosphoenolpyruvate.

It belongs to the EPSP synthase family. In terms of assembly, monomer.

It is found in the cytoplasm. The catalysed reaction is 3-phosphoshikimate + phosphoenolpyruvate = 5-O-(1-carboxyvinyl)-3-phosphoshikimate + phosphate. It functions in the pathway metabolic intermediate biosynthesis; chorismate biosynthesis; chorismate from D-erythrose 4-phosphate and phosphoenolpyruvate: step 6/7. Functionally, catalyzes the transfer of the enolpyruvyl moiety of phosphoenolpyruvate (PEP) to the 5-hydroxyl of shikimate-3-phosphate (S3P) to produce enolpyruvyl shikimate-3-phosphate and inorganic phosphate. The chain is 3-phosphoshikimate 1-carboxyvinyltransferase from Shigella sonnei.